Reading from the N-terminus, the 165-residue chain is Small ribosomal subunit protein uS5 (165 aa).

The S5 DRBM domain occupies 13 to 76; that stretch reads LEEKVLVVNR…EAARKNLITI (64 aa).

This sequence belongs to the universal ribosomal protein uS5 family. As to quaternary structure, part of the 30S ribosomal subunit. Contacts proteins S4 and S8.

Its function is as follows. With S4 and S12 plays an important role in translational accuracy. Located at the back of the 30S subunit body where it stabilizes the conformation of the head with respect to the body. The sequence is that of Small ribosomal subunit protein uS5 from Chlamydia felis (strain Fe/C-56) (Chlamydophila felis).